Here is a 227-residue protein sequence, read N- to C-terminus: Cytidylate kinase (227 aa).

Residue 12-20 coordinates ATP; it reads GPSGAGKGT.

This sequence belongs to the cytidylate kinase family. Type 1 subfamily.

It is found in the cytoplasm. The enzyme catalyses CMP + ATP = CDP + ADP. It catalyses the reaction dCMP + ATP = dCDP + ADP. The sequence is that of Cytidylate kinase from Salmonella typhimurium (strain LT2 / SGSC1412 / ATCC 700720).